Consider the following 105-residue polypeptide: Cytochrome c-553-like (105 aa).

A signal peptide spans 1-29 (MAGIVSLVILAVALFSFMNFDPYVSQVLA). 4 residues coordinate heme c: Cys-45, Cys-48, His-49, and Met-85.

Binds 1 heme c group covalently per subunit.

The chain is Cytochrome c-553-like (cytM) from Synechocystis sp. (strain ATCC 27184 / PCC 6803 / Kazusa).